A 209-amino-acid polypeptide reads, in one-letter code: MATPPTLPVTNQQAVQSQPPINTPAFRTFFSRLSTSIRDGLSQRRPWTELIDRSSMARPESLTDALSRIRKNLAYFKVNYVAIVSLVLAFSLFSHPLSLLVLIGLLGGWMFLYLFRPSDQPLVVFGRTFSDRETLLALVLSTIVVVFMTSVGSLLTSALMIGVAIVCVHGAFVVPDDLFLDEQEPANAGLLSFLGGSATSAAAAVSGRV.

Alanine 2 is subject to N-acetylalanine. 5 consecutive transmembrane segments (helical) span residues 73–93 (LAYFKVNYVAIVSLVLAFSLF), 95–115 (HPLSLLVLIGLLGGWMFLYLF), 133–153 (ETLLALVLSTIVVVFMTSVGS), 154–174 (LLTSALMIGVAIVCVHGAFVV), and 185–205 (PANAGLLSFLGGSATSAAAAV).

The protein belongs to the PRA1 family. As to quaternary structure, can form homodimer. Interacts with PRA1B2, PRA1B3, PRA1B4, PRA1B5, PRA1B6 and PRA1E.

The protein localises to the endosome membrane. May be involved in both secretory and endocytic intracellular trafficking in the endosomal/prevacuolar compartments. The chain is PRA1 family protein B1 (PRA1B1) from Arabidopsis thaliana (Mouse-ear cress).